The sequence spans 421 residues: Phosphoribosylamine--glycine ligase (421 aa).

In terms of domain architecture, ATP-grasp spans 108-314 (KEIMVKYNVP…FAQNIDDIMM (207 aa)). 134 to 195 (IEEQGAPIVV…EEFLDGEEFS (62 aa)) contributes to the ATP binding site. The Mg(2+) site is built by glutamate 284 and asparagine 286.

Belongs to the GARS family. Requires Mg(2+) as cofactor. Mn(2+) serves as cofactor.

It catalyses the reaction 5-phospho-beta-D-ribosylamine + glycine + ATP = N(1)-(5-phospho-beta-D-ribosyl)glycinamide + ADP + phosphate + H(+). Its pathway is purine metabolism; IMP biosynthesis via de novo pathway; N(1)-(5-phospho-D-ribosyl)glycinamide from 5-phospho-alpha-D-ribose 1-diphosphate: step 2/2. The polypeptide is Phosphoribosylamine--glycine ligase (Streptococcus pyogenes serotype M6 (strain ATCC BAA-946 / MGAS10394)).